Reading from the N-terminus, the 113-residue chain is Small ribosomal subunit protein mS41 (113 aa).

The transit peptide at 1 to 22 (MLILKRIFIIRNFIFPFSNCRY) directs the protein to the mitochondrion.

Belongs to the mitochondrion-specific ribosomal protein mS41 family. As to quaternary structure, component of the mitochondrial small ribosomal subunit (mt-SSU). Mature yeast 74S mitochondrial ribosomes consist of a small (37S) and a large (54S) subunit. The 37S small subunit contains a 15S ribosomal RNA (15S mt-rRNA) and at least 32 different proteins. The 54S large subunit contains a 21S rRNA (21S mt-rRNA) and at least 45 different proteins.

It localises to the mitochondrion. Component of the mitochondrial ribosome (mitoribosome), a dedicated translation machinery responsible for the synthesis of mitochondrial genome-encoded proteins, including at least some of the essential transmembrane subunits of the mitochondrial respiratory chain. The mitoribosomes are attached to the mitochondrial inner membrane and translation products are cotranslationally integrated into the membrane. mS41 is involved in telomere length regulation. This chain is Small ribosomal subunit protein mS41 (fyv4), found in Schizosaccharomyces pombe (strain 972 / ATCC 24843) (Fission yeast).